The following is a 305-amino-acid chain: MELIFLGTSAGVPTRTRNVTAILLNLQHPTQSGLWLFDCGEGTQHQLLHTAFNPGKLDKIFISHLHGDHLFGLPGLLCSRSMSGIVQPLTIYGPQGIREFVETALRISGSWTDYPLEIVEIGAGEIFDDGLRKVTAYPLEHPLECYGYRIEEHDKPGALNAQALKAAGVPPGPLFQALKAGKTIMLEDGRQINGADYLAAPVPGKALAIFGDTGPCDAALDLAKGVDVMVHEATLDITMEAKANSRGHSSTRQAATLAREAGVGKLIITHVSSRYDDKGCQHLLRECRSIFPATELANDFTVFNV.

Residues H64, H66, D68, H69, H141, D212, and H270 each contribute to the Zn(2+) site. The Proton acceptor role is filled by D68.

This sequence belongs to the RNase Z family. RNase BN subfamily. As to quaternary structure, homodimer. It depends on Zn(2+) as a cofactor.

Its function is as follows. Zinc phosphodiesterase, which has both exoribonuclease and endoribonuclease activities. The sequence is that of Ribonuclease BN from Escherichia coli O7:K1 (strain IAI39 / ExPEC).